The primary structure comprises 263 residues: Zinc transporter ZupT (263 aa).

Transmembrane regions (helical) follow at residues 1 to 21, 37 to 57, 68 to 88, 116 to 136, and 138 to 158; these read MLFA…GGLI, LGFS…PGAF, GGSW…AIID, MMKM…PEGF, and TFLA…AIAI. The Fe(2+) site is built by Asn131 and Glu134. Residue Glu134 coordinates Zn(2+). His159 contacts Zn(2+). Fe(2+) is bound by residues Asn160, Glu163, and Glu192. Residue Glu163 coordinates Zn(2+). 3 helical membrane-spanning segments follow: residues 184–204, 206–226, and 243–263; these read WATL…LLLM, FIGP…MVFI, and TAIY…LLFI.

The protein belongs to the ZIP transporter (TC 2.A.5) family. ZupT subfamily.

The protein resides in the cell membrane. It carries out the reaction Zn(2+)(in) = Zn(2+)(out). Mediates zinc uptake. May also transport other divalent cations. This Corynebacterium glutamicum (strain ATCC 13032 / DSM 20300 / JCM 1318 / BCRC 11384 / CCUG 27702 / LMG 3730 / NBRC 12168 / NCIMB 10025 / NRRL B-2784 / 534) protein is Zinc transporter ZupT.